The sequence spans 203 residues: Inosine triphosphate pyrophosphatase (203 aa).

13-18 (TGNAKK) is a binding site for ITP. Mg(2+) is bound at residue glutamate 43. ITP contacts are provided by residues lysine 55, 71–72 (DT), lysine 88, 147–150 (FGWD), lysine 170, and 175–176 (HR).

Belongs to the HAM1 NTPase family. Homodimer. The cofactor is Mg(2+). Mn(2+) serves as cofactor.

It localises to the cytoplasm. It carries out the reaction ITP + H2O = IMP + diphosphate + H(+). It catalyses the reaction dITP + H2O = dIMP + diphosphate + H(+). The catalysed reaction is XTP + H2O = XMP + diphosphate + H(+). The enzyme catalyses N(6)-hydroxy-dATP + H2O = N(6)-hydroxy-dAMP + diphosphate + H(+). Pyrophosphatase that hydrolyzes the non-canonical purine nucleotides inosine triphosphate (ITP), deoxyinosine triphosphate (dITP) as well as 2'-deoxy-N-6-hydroxylaminopurine triphosphate (dHAPTP) and xanthosine 5'-triphosphate (XTP) to their respective monophosphate derivatives. The enzyme does not distinguish between the deoxy- and ribose forms. Probably excludes non-canonical purines from RNA and DNA precursor pools, thus preventing their incorporation into RNA and DNA and avoiding chromosomal lesions. This is Inosine triphosphate pyrophosphatase (itpa) from Danio rerio (Zebrafish).